The primary structure comprises 217 residues: Translation initiation factor 6 (217 aa).

This sequence belongs to the eIF-6 family.

Functionally, binds to the 50S ribosomal subunit and prevents its association with the 30S ribosomal subunit to form the 70S initiation complex. The protein is Translation initiation factor 6 of Picrophilus torridus (strain ATCC 700027 / DSM 9790 / JCM 10055 / NBRC 100828 / KAW 2/3).